A 672-amino-acid chain; its full sequence is DNA ligase (672 aa).

Residues 30–34 (DAVYD), 79–80 (SL), and Glu110 contribute to the NAD(+) site. The active-site N6-AMP-lysine intermediate is the Lys112. NAD(+) is bound by residues Arg133, Glu170, Lys287, and Lys311. Cys405, Cys408, Cys423, and Cys429 together coordinate Zn(2+). Residues 590 to 672 (ADELPLSGKT…IALLTEHGAI (83 aa)) enclose the BRCT domain.

The protein belongs to the NAD-dependent DNA ligase family. LigA subfamily. The cofactor is Mg(2+). Mn(2+) serves as cofactor.

The enzyme catalyses NAD(+) + (deoxyribonucleotide)n-3'-hydroxyl + 5'-phospho-(deoxyribonucleotide)m = (deoxyribonucleotide)n+m + AMP + beta-nicotinamide D-nucleotide.. DNA ligase that catalyzes the formation of phosphodiester linkages between 5'-phosphoryl and 3'-hydroxyl groups in double-stranded DNA using NAD as a coenzyme and as the energy source for the reaction. It is essential for DNA replication and repair of damaged DNA. The polypeptide is DNA ligase (Marinomonas sp. (strain MWYL1)).